The primary structure comprises 268 residues: Non-homologous end joining protein Ku (268 aa).

Residues 13-175 form the Ku domain; sequence VSLVTCPVTM…TLHDGNAVRN (163 aa). The segment at 174–194 is disordered; sequence RNGGHPAARTRPASEAESADS.

Belongs to the prokaryotic Ku family. As to quaternary structure, homodimer. Interacts with LigD.

With LigD forms a non-homologous end joining (NHEJ) DNA repair enzyme, which repairs dsDNA breaks with reduced fidelity. Binds linear dsDNA with 5'- and 3'- overhangs but not closed circular dsDNA nor ssDNA. Recruits and stimulates the ligase activity of LigD. The chain is Non-homologous end joining protein Ku from Gluconacetobacter diazotrophicus (strain ATCC 49037 / DSM 5601 / CCUG 37298 / CIP 103539 / LMG 7603 / PAl5).